The following is a 234-amino-acid chain: Large ribosomal subunit protein uL1 (234 aa).

This sequence belongs to the universal ribosomal protein uL1 family. As to quaternary structure, part of the 50S ribosomal subunit.

Functionally, binds directly to 23S rRNA. The L1 stalk is quite mobile in the ribosome, and is involved in E site tRNA release. In terms of biological role, protein L1 is also a translational repressor protein, it controls the translation of the L11 operon by binding to its mRNA. The chain is Large ribosomal subunit protein uL1 from Salmonella agona (strain SL483).